Here is a 223-residue protein sequence, read N- to C-terminus: MRLRAVLFDMDGTLLDTAPDFIAICQAMLAERGLPAVDDNLIRGVISGGARAMVATAFAMDPEADGFEALRLEFLERYQRDCAVHSKLFEGMAELLADIEKGNLLWGVVTNKPVRFAEPIMQQLGLAERSALLICPDHVKNSKPDPEPLILACKTLNLDPASVLFVGDDLRDIESGRDAGTRTAAVRYGYIHPEDNPNNWGADVVVDHPLELRKVIDSALCGC.

The active-site Nucleophile is the aspartate 9. Mg(2+)-binding residues include aspartate 9, aspartate 11, and aspartate 168. The active-site Proton donor is the aspartate 11.

It belongs to the HAD-like hydrolase superfamily. CbbY/CbbZ/Gph/YieH family. Phosphatase MupP subfamily. Mg(2+) serves as cofactor.

It catalyses the reaction N-acetyl-D-muramate 6-phosphate + H2O = N-acetyl-D-muramate + phosphate. Its pathway is cell wall biogenesis; peptidoglycan recycling. In terms of biological role, specifically catalyzes the dephosphorylation of N-acetylmuramate 6-phosphate (MurNAc-6P) to MurNac. Is involved in peptidoglycan recycling as part of a cell wall recycling pathway that bypasses de novo biosynthesis of the peptidoglycan precursor UDP-MurNAc. Plays a role in intrinsic resistance to fosfomycin, which targets the de novo synthesis of UDP-MurNAc. Shows a very low activity on GlcNAc-6P, and neither alpha-1-phosphorylated MurNAc, GlcNAc, or glucose nor glucosamine-6P or glucose-6P can be used as a substrate. The polypeptide is N-acetylmuramic acid 6-phosphate phosphatase (Pseudomonas putida (strain ATCC 47054 / DSM 6125 / CFBP 8728 / NCIMB 11950 / KT2440)).